We begin with the raw amino-acid sequence, 172 residues long: Carotene biosynthesis-related protein CBR, chloroplastic (172 aa).

Positions 41–66 (AENNPSTPPPSSPSPPPPPPTPAAPT) are disordered. Positions 46 to 63 (STPPPSSPSPPPPPPTPA) are enriched in pro residues. The next 2 membrane-spanning stretches (helical) occupy residues 111 to 131 (PTLI…PAFA) and 152 to 172 (FAMI…IALF).

This sequence belongs to the ELIP/psbS family.

Its subcellular location is the plastid. It is found in the chloroplast membrane. Its function is as follows. Putative zeaxanthin binding protein. That forms photoprotective complexes within the light-harvesting antennae. The polypeptide is Carotene biosynthesis-related protein CBR, chloroplastic (CBR) (Dunaliella salina (Green alga)).